A 576-amino-acid chain; its full sequence is MEAKGKVVGVIGNLVTIEMVGTVSMNEIVFIKTGGQSLKAEIIRIRDGEVDAQVFEMTRGIAVGDDVEFTDKLLTVELGPGLLSQVYDGLQNPLPELATKCGFFLERGLYLSALDRNKKWSFNATAKVGDFVVAGDFLGFVIEGTINHQIMVPFDRRDSYRIIEIVGDGDYTVDDKIAVIEDDAGGKHIITMSFHWPVKVPVTSYKKRLIPNETMVTQTRIIDTFFPVAKGGTFCIPGPFGAGKTVLQQVTSRNADVDIVIIAACGERAGEVVETLKEFPELTDPRTGKSLMERTCIICNTSSMPVAAREASVYTAITIGEYYRQMGLDILLLADSTSRWAQAMREMSGRLEEIPGDEAFPAYLESVIASFYERAGVVVLNNGSVGSVTVGGSVSPAGGNFEEPVTQATLKVVGAFHGLTRERSDARKFPAINPLDSWSKYRGVVEYEATEYARAFLVKGNEVNQMMRVVGEDGVSIDDFVVYLKSELLDSCYLQQNSFDSVDAAVSFERQNYMFNILYKILQSDFKFENKLEARSFINDLRQNILDMNLAPFKQEKFNKLEINLKNLLRSKKLDF.

238–245 (GPFGAGKT) is an ATP binding site.

It belongs to the ATPase alpha/beta chains family.

The catalysed reaction is ATP + H2O + 4 H(+)(in) = ADP + phosphate + 5 H(+)(out). Its function is as follows. Produces ATP from ADP in the presence of a proton gradient across the membrane. The V-type alpha chain is a catalytic subunit. This chain is V-type ATP synthase alpha chain, found in Borrelia duttonii (strain Ly).